Consider the following 220-residue polypeptide: Deoxyribose-phosphate aldolase (220 aa).

The active-site Proton donor/acceptor is D89. K152 (schiff-base intermediate with acetaldehyde) is an active-site residue. K181 (proton donor/acceptor) is an active-site residue.

It belongs to the DeoC/FbaB aldolase family. DeoC type 1 subfamily.

The protein localises to the cytoplasm. The enzyme catalyses 2-deoxy-D-ribose 5-phosphate = D-glyceraldehyde 3-phosphate + acetaldehyde. It participates in carbohydrate degradation; 2-deoxy-D-ribose 1-phosphate degradation; D-glyceraldehyde 3-phosphate and acetaldehyde from 2-deoxy-alpha-D-ribose 1-phosphate: step 2/2. Its function is as follows. Catalyzes a reversible aldol reaction between acetaldehyde and D-glyceraldehyde 3-phosphate to generate 2-deoxy-D-ribose 5-phosphate. In Enterococcus faecalis (strain ATCC 700802 / V583), this protein is Deoxyribose-phosphate aldolase.